The following is a 1313-amino-acid chain: Histone-lysine N-methyltransferase, H3 lysine-4 specific (1313 aa).

Disordered stretches follow at residues 1–205 (MSRS…DPSR), 400–458 (KKSR…KPRH), 555–607 (GKSS…AKNL), 667–792 (IVFD…AGED), 842–908 (ELPS…SKKQ), and 932–982 (AGIE…DPEL). Residues 7-18 (ASFAQFFPAAPR) are compositionally biased toward low complexity. The span at 19-31 (AARDRATERERAR) shows a compositional bias: basic and acidic residues. Over residues 70-80 (HITSLNHSSSA) the composition is skewed to polar residues. Low complexity predominate over residues 105-121 (SASSHTSTSSSIFSSST). 2 stretches are compositionally biased toward polar residues: residues 130 to 158 (SVRN…STSL) and 174 to 186 (NGLT…SATD). The segment covering 194–204 (GTERVPPRDPS) has biased composition (basic and acidic residues). Over residues 559 to 607 (RSSEDHRRHSYGSEKRPPPEHRQRDDQDRRRRDEEADIEEEKKQRAKNL) the composition is skewed to basic and acidic residues. Residues 702-716 (RVRKLKSRGVNARKH) show a composition bias toward basic residues. Residues 758–784 (MIRDTEEPESRPRSRVSSEEDRNKEET) are compositionally biased toward basic and acidic residues. Positions 843 to 855 (LPSQEQAVESVTP) are enriched in polar residues. Residues 868–884 (ADVKAEPAEDKETEDSR) show a composition bias toward basic and acidic residues. Residues 895–907 (PKKKAKAKKKSKK) show a composition bias toward basic residues. Basic and acidic residues predominate over residues 960–978 (LETKGEALEAPETESKPDL). The RxxxRR motif motif lies at 1137–1142 (RVNNRR). In terms of domain architecture, SET spans 1171 to 1288 (KPVKFARSAI…QNEELTYDYK (118 aa)). Tyr1287 contributes to the S-adenosyl-L-methionine binding site. In terms of domain architecture, Post-SET spans 1297–1313 (DRIPCLCGTAACKGFLN).

The protein belongs to the class V-like SAM-binding methyltransferase superfamily. In terms of assembly, component of the Set1C/COMPASS complex.

The protein resides in the nucleus. It is found in the chromosome. It catalyses the reaction L-lysyl(4)-[histone H3] + 3 S-adenosyl-L-methionine = N(6),N(6),N(6)-trimethyl-L-lysyl(4)-[histone H3] + 3 S-adenosyl-L-homocysteine + 3 H(+). The enzyme catalyses N(6)-methyl-L-lysyl(4)-[histone H3] + S-adenosyl-L-methionine = N(6),N(6)-dimethyl-L-lysyl(4)-[histone H3] + S-adenosyl-L-homocysteine + H(+). The catalysed reaction is N(6),N(6)-dimethyl-L-lysyl(4)-[histone H3] + S-adenosyl-L-methionine = N(6),N(6),N(6)-trimethyl-L-lysyl(4)-[histone H3] + S-adenosyl-L-homocysteine + H(+). In terms of biological role, catalytic component of the COMPASS (Set1C) complex that specifically mono-, di- and trimethylates histone H3 to form H3K4me1/2/3. Binds RNAs which might negatively affect its histone methyltransferase activity. COMPASS recognizes ubiquitinated H2B on one face of the nucleosome which stimulates the methylation of H3 on the opposing face. This is Histone-lysine N-methyltransferase, H3 lysine-4 specific (set-1) from Neurospora crassa (strain ATCC 24698 / 74-OR23-1A / CBS 708.71 / DSM 1257 / FGSC 987).